The primary structure comprises 373 residues: Extensin-1 (373 aa).

Positions 1 to 19 (MASFLVLAFSLAFVSQTTA) are cleaved as a signal peptide. Tandem repeats lie at residues 25–33 (SPPPPVKHY), 34–40 (SPPPVYK), 41–49 (SPPPPVKHY), 50–56 (SPPPVYK), 57–65 (SPPPPVKHY), 66–72 (SPPPVYK), 73–81 (SPPPPVKYY), 82–88 (SPPPVYK), 97–105 (SPPPPVKHY), 106–112 (SPPPVYK), 113–121 (SPPPPVKHY), 122–128 (SPPPVYK), 129–137 (SPPPPVKHY), 138–144 (SPPPVYK), 145–153 (SPPPPVKHY), 154–160 (SPPPVYK), 161–169 (SPPPPVKYY), 170–176 (SPPPVYK), 177–185 (SPPPPVKHY), 186–192 (SPPPVYK), 193–201 (SPPPPVKYY), 202–208 (SPPPVYK), 209–217 (SPPPPVKHY), 218–224 (SPPPVYK), 225–233 (SPPPPVKYY), 234–240 (SPPPVYK), 241–248 (SPPPPVHY), 249–256 (SPPPVVYH), 257–264 (SPPPPVHY), 265–272 (SPPPVVYH), 273–280 (SPPPPVHY), 281–288 (SPPPVVYH), 289–296 (SPPPPVHY), 297–304 (SPPPVVYH), 305–312 (SPPPPVHY), and 313–320 (SPPPVVYH). Positions 25 to 233 (SPPPPVKHYS…KSPPPPVKYY (209 aa)) are 13 X 9 AA repeats of S-P-P-P-P-V-K-[HY]-Y. The interval 34–240 (SPPPVYKSPP…KYYSPPPVYK (207 aa)) is 13 X 7 AA repeats of S-P-P-P-V-Y-K. The segment at 241 to 312 (SPPPPVHYSP…YHSPPPPVHY (72 aa)) is 5 X 8 AA repeats of S-P-P-P-P-V-H-Y. Positions 249-320 (SPPPVVYHSP…HYSPPPVVYH (72 aa)) are 5 X 8 AA repeats of S-P-P-P-V-V-Y-H. 2 isodityrosine cross-linking regions span residues 329 to 332 (YEYK) and 363 to 366 (YLYK). The tract at residues 349 to 373 (PPPPVHHYSPPHQPYLYKSPPPPHY) is disordered.

The protein belongs to the extensin family. Post-translationally, extensins contain a characteristic repeat of the pentapeptide Ser-Pro(4). For this particular extensin, a typical repeat of Ser-Pro(3) is found. In both cases, the proline residues are hydroxylated and then O-glycosylated (arabinosylation). In terms of processing, synthetised as soluble proteins which become insolubilised in the cell wall through the intermolecular cross-linking of Tyr on adjacent monomers. Isodityrosine (IDT) stabilizes and makes rigid the part of the polypeptide where IDT functional sites are present. Predominantly expressed in the roots. Not detected in the leaves, nor in flowers or flower buds. Wounding reverses this pattern, turning on the gene in the leaves and repressing it in the roots.

It localises to the secreted. The protein resides in the primary cell wall. Structural component which strengthens the primary cell wall. The protein is Extensin-1 of Arabidopsis thaliana (Mouse-ear cress).